A 396-amino-acid chain; its full sequence is CCA-adding enzyme (396 aa).

Glycine 27 and arginine 30 together coordinate ATP. CTP is bound by residues glycine 27 and arginine 30. Residues aspartate 40 and aspartate 42 each contribute to the Mg(2+) site. ATP-binding residues include arginine 111, aspartate 154, arginine 157, arginine 160, and arginine 163. CTP-binding residues include arginine 111, aspartate 154, arginine 157, arginine 160, and arginine 163.

The protein belongs to the tRNA nucleotidyltransferase/poly(A) polymerase family. Bacterial CCA-adding enzyme type 3 subfamily. Homodimer. Requires Mg(2+) as cofactor.

The catalysed reaction is a tRNA precursor + 2 CTP + ATP = a tRNA with a 3' CCA end + 3 diphosphate. The enzyme catalyses a tRNA with a 3' CCA end + 2 CTP + ATP = a tRNA with a 3' CCACCA end + 3 diphosphate. Its function is as follows. Catalyzes the addition and repair of the essential 3'-terminal CCA sequence in tRNAs without using a nucleic acid template. Adds these three nucleotides in the order of C, C, and A to the tRNA nucleotide-73, using CTP and ATP as substrates and producing inorganic pyrophosphate. tRNA 3'-terminal CCA addition is required both for tRNA processing and repair. Also involved in tRNA surveillance by mediating tandem CCA addition to generate a CCACCA at the 3' terminus of unstable tRNAs. While stable tRNAs receive only 3'-terminal CCA, unstable tRNAs are marked with CCACCA and rapidly degraded. In Pediococcus pentosaceus (strain ATCC 25745 / CCUG 21536 / LMG 10740 / 183-1w), this protein is CCA-adding enzyme.